We begin with the raw amino-acid sequence, 117 residues long: Large ribosomal subunit protein bL20c (117 aa).

It belongs to the bacterial ribosomal protein bL20 family.

The protein localises to the plastid. It is found in the chloroplast. Its function is as follows. Binds directly to 23S ribosomal RNA and is necessary for the in vitro assembly process of the 50S ribosomal subunit. It is not involved in the protein synthesizing functions of that subunit. This is Large ribosomal subunit protein bL20c from Arabis hirsuta (Hairy rock-cress).